The following is a 97-amino-acid chain: Putative septation protein SpoVG (97 aa).

The protein belongs to the SpoVG family.

Functionally, could be involved in septation. The protein is Putative septation protein SpoVG of Borreliella burgdorferi (strain ATCC 35210 / DSM 4680 / CIP 102532 / B31) (Borrelia burgdorferi).